Reading from the N-terminus, the 713-residue chain is MSDQIRASGYFYSQTDDPFAAAFWSQFQDPHVLAARHIPADSSASAAMKAYREYRDRVRKPVLATYTILGFLSSGTYGRVYKARLRTPPQLASSSGTAGIANANAGTGSGTATVGSGASTAKKRGGLLQQHQLLDSPSSSLHATPKSVADGAGVGVNGTPSASPSLSASLGTSTANAPGGSDNTLQLSSNELPDTQIYAIKKFKPDSKETDATIYTGISQSAMREISLNRELSHVNIVTLHQVMLEDKAIYMVFEYAEHDLLQIIHYHSTALRAPIPLAVLKSLLWQLINGVAYLHANWILHRDLKPANILVTSQGVVKIGDLGLARLYSSPLQSLYNGDKVVVTIWYRAPELLLGARHYTTAIDMWSVGCIWGELLALRPMFKGEEAKMDPKTKAAPFQTDQLKRIVEVLGTPNKDRWPAIESMPDYKGWWPHLRLDNYPKTLSRWYATRNKGDDGYELFNSLLQYDPEQRLTANQALEHAWFTAQDPKPTANAFSSLAKPHATYPNRRVIQDDMDPKMKSNYVPPIKSHHMQPWHQVNLNSSQPHRLAQLMYQQEQMRHQQMQTQAPAPAPAQPPAATAVTGRLGHAVGAGSSAVGTAANVGGPAAPPPIAIGSTAGTGGAIGIQSSAASTAPSQHMYNNNPLITIAGTNGGTISNPATVRSSHSIGSTESITPTTSSQPIPAQPSSAPLARTTNLVATATRNQQRKRQRN.

The Protein kinase domain maps to 66–484 (YTILGFLSSG…ANQALEHAWF (419 aa)). 72-80 (LSSGTYGRV) provides a ligand contact to ATP. Residues 104–120 (NAGTGSGTATVGSGAST) are compositionally biased toward low complexity. Residues 104–188 (NAGTGSGTAT…GGSDNTLQLS (85 aa)) form a disordered region. Over residues 129–142 (QQHQLLDSPSSSLH) the composition is skewed to polar residues. The span at 158 to 175 (GTPSASPSLSASLGTSTA) shows a compositional bias: low complexity. K201 lines the ATP pocket. The Proton acceptor role is filled by D304. The segment covering 657-672 (SNPATVRSSHSIGSTE) has biased composition (polar residues). The interval 657–713 (SNPATVRSSHSIGSTESITPTTSSQPIPAQPSSAPLARTTNLVATATRNQQRKRQRN) is disordered. Low complexity predominate over residues 673 to 691 (SITPTTSSQPIPAQPSSAP). Positions 694-705 (RTTNLVATATRN) are enriched in polar residues.

It belongs to the protein kinase superfamily. CMGC Ser/Thr protein kinase family. CDC2/CDKX subfamily. In terms of assembly, component of the srb8-11 complex, a regulatory module of the Mediator complex. The cofactor is Mg(2+).

It is found in the nucleus. The enzyme catalyses L-seryl-[protein] + ATP = O-phospho-L-seryl-[protein] + ADP + H(+). It carries out the reaction L-threonyl-[protein] + ATP = O-phospho-L-threonyl-[protein] + ADP + H(+). The catalysed reaction is [DNA-directed RNA polymerase] + ATP = phospho-[DNA-directed RNA polymerase] + ADP + H(+). Functionally, component of the srb8-11 complex. The srb8-11 complex is a regulatory module of the Mediator complex which is itself dependent transcription. The srb8-11 complex may be involved in the transcriptional repression of a subset of genes regulated by Mediator. It may inhibit the association of the Mediator complex with RNA polymerase II to form the holoenzyme complex. The srb8-11 complex phosphorylates the C-terminal domain (CTD) of the largest subunit of RNA polymerase II. In Mycosarcoma maydis (Corn smut fungus), this protein is Serine/threonine-protein kinase SSN3 (SSN3).